The following is a 315-amino-acid chain: Aspartate carbamoyltransferase catalytic subunit (315 aa).

Arg-65 and Thr-66 together coordinate carbamoyl phosphate. L-aspartate is bound at residue Lys-93. Residues Arg-115, His-145, and Gln-148 each coordinate carbamoyl phosphate. Positions 179 and 234 each coordinate L-aspartate. Residues Gly-275 and Pro-276 each contribute to the carbamoyl phosphate site.

Belongs to the aspartate/ornithine carbamoyltransferase superfamily. ATCase family. Heterododecamer (2C3:3R2) of six catalytic PyrB chains organized as two trimers (C3), and six regulatory PyrI chains organized as three dimers (R2).

It carries out the reaction carbamoyl phosphate + L-aspartate = N-carbamoyl-L-aspartate + phosphate + H(+). Its pathway is pyrimidine metabolism; UMP biosynthesis via de novo pathway; (S)-dihydroorotate from bicarbonate: step 2/3. Catalyzes the condensation of carbamoyl phosphate and aspartate to form carbamoyl aspartate and inorganic phosphate, the committed step in the de novo pyrimidine nucleotide biosynthesis pathway. This chain is Aspartate carbamoyltransferase catalytic subunit, found in Xanthomonas campestris pv. campestris (strain 8004).